Reading from the N-terminus, the 969-residue chain is Surface protein P113 (969 aa).

The N-terminal stretch at 1–22 (MKIPFFILHILLLQFLLCLIRC) is a signal peptide. A glycan (N-linked (GlcNAc...) asparagine) is linked at Asn207. Residues 223–328 (IGDESTDSSS…TDTLVNNKEN (106 aa)) form a disordered region. A compositionally biased stretch (polar residues) spans 229-241 (DSSSMEIQDSTSN). N-linked (GlcNAc...) asparagine glycosylation is present at Asn268. Residues 300–311 (KNEDNKDLEHGS) show a composition bias toward basic and acidic residues. The span at 312–325 (SNDVNNNTDTLVNN) shows a compositional bias: low complexity. Asn317, Asn360, Asn661, and Asn697 each carry an N-linked (GlcNAc...) asparagine glycan. Residues 688-705 (SSNFNIFDSNNTDQNNEQ) are compositionally biased toward polar residues. The segment at 688–947 (SSNFNIFDSN…NETNKTDNGS (260 aa)) is disordered. Over residues 713 to 727 (QLLNNNNDDVLSESN) the composition is skewed to low complexity. Over residues 728–749 (NENKEKTSDDATHKETQEKSDQ) the composition is skewed to basic and acidic residues. Residue Asn779 is glycosylated (N-linked (GlcNAc...) asparagine). Over residues 798–811 (EGTEELQQNDEDAE) the composition is skewed to acidic residues. The segment covering 812–822 (SLTKENSKSEE) has biased composition (basic and acidic residues). A compositionally biased stretch (acidic residues) spans 823 to 841 (QENEDSTDAEAIDKEEVET). Over residues 842–854 (EEKGKDEQKKDEQ) the composition is skewed to basic and acidic residues. The segment covering 855-864 (KEQDEEEDGE) has biased composition (acidic residues). N-linked (GlcNAc...) asparagine glycosylation occurs at Asn876. Positions 883–896 (EENKNEVKGEEHLQ) are enriched in basic and acidic residues. Residues 897-907 (GSEQSIEASES) show a composition bias toward low complexity. Basic and acidic residues predominate over residues 908 to 917 (SQKDETKETE). Residues 918 to 936 (DKEEYVNANDDESSEEDTT) show a composition bias toward acidic residues. Positions 937–947 (PNETNKTDNGS) are enriched in polar residues. Residues Asn938, Asn941, and Asn945 are each glycosylated (N-linked (GlcNAc...) asparagine). Asn945 carries GPI-anchor amidated asparagine lipidation. A propeptide spans 946–969 (GSSFFFAMSNALLVILLLLFIEFL) (removed in mature form).

Forms a complex composed of RH5, P113 and human BSG/basigin; the complex bridges the merozoite and host erythrocyte membranes. Within the complex, interacts with RH5 (via N-terminus); the interaction tethers RH5 to the merozoite membrane.

It is found in the cell membrane. Membrane receptor which tethers secreted RH5 to the merozoite membrane during merozoite invasion of host erythocytes. This Plasmodium falciparum (isolate 3D7) protein is Surface protein P113.